Consider the following 326-residue polypeptide: 5-dehydro-2-deoxygluconokinase (326 aa).

The protein belongs to the carbohydrate kinase PfkB family.

It catalyses the reaction 5-dehydro-2-deoxy-D-gluconate + ATP = 6-phospho-5-dehydro-2-deoxy-D-gluconate + ADP + H(+). It participates in polyol metabolism; myo-inositol degradation into acetyl-CoA; acetyl-CoA from myo-inositol: step 5/7. In terms of biological role, catalyzes the phosphorylation of 5-dehydro-2-deoxy-D-gluconate (2-deoxy-5-keto-D-gluconate or DKG) to 6-phospho-5-dehydro-2-deoxy-D-gluconate (DKGP). This Shouchella clausii (strain KSM-K16) (Alkalihalobacillus clausii) protein is 5-dehydro-2-deoxygluconokinase.